The following is a 30-amino-acid chain: Snaclec carinactivase-1 regulatory subunit 17 kDa chain (30 aa).

Residues 1–30 enclose the C-type lectin domain; it reads DCLPGWSSHEGHCYKVFNQEMYWADAEKFC. Cys2 and Cys13 form a disulfide bridge.

This sequence belongs to the snaclec family. Heterodimer of a metalloproteinase subunit and a regulatory subunit comprising two polypeptides disulfide-linked (14 kDa and 17 kDa chains). Expressed by the venom gland.

Its subcellular location is the secreted. Functionally, calcium-dependent prothrombin activator. This protein may activate prothrombin via recognition by the regulatory subunit of the calcium ion bound conformation of its gamma-carboxyglutamic acid (GLA) domain, and the subsequent conversion of prothrombin to active thrombin is catalyzed by the catalytic subunit. This chain is Snaclec carinactivase-1 regulatory subunit 17 kDa chain, found in Echis carinatus (Saw-scaled viper).